A 286-amino-acid chain; its full sequence is Cytochrome bo(3) ubiquinol oxidase subunit 2 (286 aa).

The signal sequence occupies residues 1-24 (MQFIKYKSYILKFLLVSCIFCING). C25 carries N-palmitoyl cysteine lipidation. C25 is lipidated: S-diacylglycerol cysteine. Over 25-44 (CDCTILCPNGLIAQEQRFVL) the chain is Extracellular. A helical transmembrane segment spans residues 45–67 (FVSFFTMLLIIIPVIFMTIFFVL). Residues 68-85 (RYRESNFSKTYDPKWSHS) lie on the Cytoplasmic side of the membrane. Residues 86–108 (NIIELLIWGIPIIIIVFLSIFSW) traverse the membrane as a helical segment. At 109 to 286 (KSVHDLDPKK…VIANVLKISL (178 aa)) the chain is on the extracellular side.

The protein belongs to the cytochrome c oxidase subunit 2 family. As to quaternary structure, heterooctamer of two A chains, two B chains, two C chains and two D chains.

Its subcellular location is the cell membrane. In terms of biological role, cytochrome bo(3) ubiquinol terminal oxidase is the component of the aerobic respiratory chain of E.coli that predominates when cells are grown at high aeration. Has proton pump activity across the membrane in addition to electron transfer, pumping 2 protons/electron. In Buchnera aphidicola subsp. Baizongia pistaciae (strain Bp), this protein is Cytochrome bo(3) ubiquinol oxidase subunit 2 (cyoA).